Here is a 315-residue protein sequence, read N- to C-terminus: MTRLPILLLLISLVYATPFPQTSKKIGDDATLSCNRNNTNDYVVMSAWYKEPNSIILLAAKSDVLYFDNYTKDKISYDSPYDDLVTTITIKSLTARDAGTYVCAFFMTSTTNDTDKVDYEEYSTELIVNTDSESTIDIILSGSTHSPETSSEKPEDIDNFNCSSVFEIATPEPITDNVEDHTDTVTYTSDSINTVSASSGESTTDETPEPITDKEEDHTVTDTVSYTTVSTSSGIVTTKSTTDDADLYDTYNDNDTVPPTTVGGSTTSISNYKTKDFVEIFGITALIILSAVAIFCITYYIYNKRSRKYKTENKV.

A signal peptide spans 1–16 (MTRLPILLLLISLVYA). The Ig-like V-type domain maps to 17 to 121 (TPFPQTSKKI…NDTDKVDYEE (105 aa)). At 17-279 (TPFPQTSKKI…SNYKTKDFVE (263 aa)) the chain is on the virion surface side. Cys-34 and Cys-103 are joined by a disulfide. N-linked (GlcNAc...) asparagine; by host glycans are attached at residues Asn-37, Asn-69, Asn-112, and Asn-161. Positions 193–202 (NTVSASSGES) are enriched in polar residues. The interval 193 to 213 (NTVSASSGESTTDETPEPITD) is disordered. A glycan (N-linked (GlcNAc...) asparagine; by host) is linked at Asn-254. The chain crosses the membrane as a helical span at residues 280 to 303 (IFGITALIILSAVAIFCITYYIYN). Over 304–315 (KRSRKYKTENKV) the chain is Intravirion.

The protein belongs to the orthopoxvirus OPG185 family. As to quaternary structure, heterodimerizes with OPG040. The heterodimer OPG185-OPG040 interacts with components of the entry fusion complex OPG143 and OPG094. Heterodimer with C3/VPC protein; disulfide-linked. Post-translationally, glycosylated; contains phosphate and sulfate-substituted glycans. O-glycosylation is required for hemagglutination and hemadsorption activities of infected cell membranes.

Its subcellular location is the virion membrane. It localises to the host membrane. In terms of biological role, prevents cell to cell fusion by interacting with and directing the viral OPG040 protein on the host plasma membrane. The OPG185-OPG040 complex associates with components of the entry fusion complex (EFC) presumably to avoid superinfection and syncytium formation. Via its interaction with C3/VCP protein, protects the infected cell and probably also the extracellular enveloped virus from complement attack. In Homo sapiens (Human), this protein is Protein OPG185 (OPG185).